A 1500-amino-acid chain; its full sequence is Carbamoyl-phosphate synthase [ammonia], mitochondrial (1500 aa).

The N-terminal 38 residues, 1–38 (MTRILTACKVVKTLKSGFGLANVTSKRQWDFSRPGIRL), are a transit peptide targeting the mitochondrion. The interval 39–218 (LSVKAQTAHI…VKVFGKGNPT (180 aa)) is anthranilate phosphoribosyltransferase homolog. 3 positions are modified to N6-acetyllysine; alternate: K55, K57, and K119. K55 carries the N6-glutaryllysine; alternate modification. Residues K55, K57, and K119 each carry the N6-succinyllysine; alternate modification. S148 carries the post-translational modification Phosphoserine. N6-acetyllysine; alternate occurs at positions 157 and 171. At K157 the chain carries N6-succinyllysine; alternate. The residue at position 171 (K171) is an N6-glutaryllysine; alternate. K176 bears the N6-glutaryllysine mark. Residue K182 is modified to N6-acetyllysine. S189 carries the phosphoserine modification. K197 is modified (N6-acetyllysine). N6-acetyllysine; alternate occurs at positions 207, 210, 214, 219, and 228. 5 positions are modified to N6-glutaryllysine; alternate: K207, K210, K214, K219, and K228. Residue K207 is modified to N6-succinyllysine; alternate. K214 is modified (N6-succinyllysine; alternate). The Glutamine amidotransferase type-1 domain occupies 219-404 (KVVAVDCGIK…FSLIKKGKGT (186 aa)). K237 is modified (N6-glutaryllysine). The residue at position 279 (K279) is an N6-acetyllysine. An N6-acetyllysine; alternate mark is found at K280, K287, K307, and K310. Residue K280 is modified to N6-glutaryllysine; alternate. Residues K287 and K307 each carry the N6-succinyllysine; alternate modification. N6-glutaryllysine; alternate occurs at positions 307 and 310. K400 is modified (N6-succinyllysine). N6-glutaryllysine; alternate occurs at positions 402, 412, 453, and 458. N6-succinyllysine; alternate occurs at positions 402 and 412. Residues K412, K453, K458, K522, K527, and K532 each carry the N6-acetyllysine; alternate modification. An N6-succinyllysine; alternate mark is found at K458, K522, and K527. N6-glutaryllysine; alternate is present on residues K527 and K532. S537 is modified (phosphoserine; alternate). O-linked (GlcNAc) serine; alternate glycosylation occurs at S537. S540 is subject to Phosphoserine. The 193-residue stretch at 551–743 (SDKLNEINEK…LAFIAAKIAL (193 aa)) folds into the ATP-grasp 1 domain. N6-acetyllysine; alternate occurs at positions 553 and 560. At K553 the chain carries N6-glutaryllysine; alternate. 2 positions are modified to N6-succinyllysine; alternate: K553 and K560. S569 carries the phosphoserine modification. 3 positions are modified to N6-acetyllysine; alternate: K575, K603, and K612. N6-succinyllysine; alternate is present on residues K575, K603, and K612. Position 630 is an N6-acetyllysine (K630). K728 carries the N6-glutaryllysine modification. 8 positions are modified to N6-acetyllysine; alternate: K751, K757, K772, K793, K811, K831, K841, and K856. Residues K751 and K757 each carry the N6-succinyllysine; alternate modification. K757, K772, K793, and K811 each carry N6-glutaryllysine; alternate. N6-succinyllysine; alternate is present on K793. Position 831 is an N6-succinyllysine; alternate (K831). N6-glutaryllysine; alternate is present on residues K841 and K856. K869 is subject to N6-glutaryllysine. Residues K875, K889, and K892 each carry the N6-acetyllysine; alternate modification. K875, K889, and K892 each carry N6-glutaryllysine; alternate. Residues K875, K889, and K892 each carry the N6-succinyllysine; alternate modification. Residues S896 and S898 each carry the phosphoserine modification. 3 positions are modified to N6-acetyllysine; alternate: K908, K915, and K919. N6-glutaryllysine; alternate occurs at positions 908, 915, and 919. 2 positions are modified to N6-succinyllysine; alternate: K915 and K919. K935 carries the post-translational modification N6-acetyllysine. S1036 carries the phosphoserine modification. N6-acetyllysine; alternate is present on K1074. K1074 carries the post-translational modification N6-glutaryllysine; alternate. K1074 is subject to N6-succinyllysine; alternate. Phosphoserine occurs at positions 1079, 1090, and 1093. Residues 1093-1284 (SAVLDELKVA…FIDVATKVMI (192 aa)) form the ATP-grasp 2 domain. Residue K1100 is modified to N6-acetyllysine; alternate. K1100 is modified (N6-succinyllysine; alternate). K1149 carries the N6-succinyllysine modification. N6-acetyllysine; alternate is present on residues K1168 and K1183. N6-glutaryllysine; alternate is present on residues K1168 and K1183. N6-succinyllysine; alternate occurs at positions 1168 and 1183. S1203 carries the phosphoserine modification. Residue K1222 is modified to N6-acetyllysine. Residue K1224 is modified to N6-glutaryllysine. N6-acetyllysine; alternate occurs at positions 1232, 1269, and 1291. N6-succinyllysine; alternate occurs at positions 1232, 1269, and 1291. A glycan (O-linked (GlcNAc) serine) is linked at S1331. O-linked (GlcNAc) threonine glycosylation is present at T1332. Positions 1355–1500 (FKIPQKGILI…YRQYSAGKAA (146 aa)) constitute an MGS-like domain. K1356 is subject to N6-acetyllysine; alternate. An N6-glutaryllysine; alternate mark is found at K1356 and K1360. 2 positions are modified to N6-succinyllysine; alternate: K1356 and K1360. Positions 1391, 1394, and 1410 each coordinate N-acetyl-L-glutamate. 2 positions are modified to phosphoserine: S1419 and S1431. Positions 1437 and 1440 each coordinate N-acetyl-L-glutamate. At K1444 the chain carries N6-acetyllysine; alternate. K1444 bears the N6-succinyllysine; alternate mark. N1449 serves as a coordination point for N-acetyl-L-glutamate. An N6-acetyllysine; alternate mark is found at K1471, K1479, and K1486. Residues K1471, K1479, and K1486 each carry the N6-succinyllysine; alternate modification. An N6-glutaryllysine; alternate mark is found at K1479 and K1486.

In terms of assembly, can form homooligomers (monomers as predominant form and dimers). Post-translationally, 50% of the mature protein that was isolated had Leu-39 as its N-terminal residue and 50% had Ser-40 suggesting two adjacent processing sites. However, the possibility of proteolytic removal of Leu-39 during the isolation of the enzyme cannot be excluded. Undergoes proteolytic cleavage in the C-terminal region corresponding to the loss of approximately 12 AA residues from the C-terminus. In terms of processing, succinylated at Lys-287 and Lys-1291. Desuccinylated at Lys-1291 by SIRT5, leading to activation. Glutarylated. Glutarylation levels increase during fasting. Deglutarylated by SIRT5 at Lys-55, Lys-219, Lys-412, Lys-889, Lys-892, Lys-915, Lys-1360 and Lys-1486, leading to activation. As to expression, primarily in the liver and small intestine.

The protein resides in the mitochondrion. The protein localises to the nucleus. It is found in the nucleolus. Its subcellular location is the cell membrane. It catalyses the reaction hydrogencarbonate + NH4(+) + 2 ATP = carbamoyl phosphate + 2 ADP + phosphate + 2 H(+). Its activity is regulated as follows. Requires N-acetyl-L-glutamate (NAG) as an allosteric activator. N-acetyl-L-beta-phenylglutamate (Phe-NAG) can also activate CPSase I, but with an activation constant that is 2-fold higher than that for NAG. Involved in the urea cycle of ureotelic animals where the enzyme plays an important role in removing excess ammonia from the cell. This Rattus norvegicus (Rat) protein is Carbamoyl-phosphate synthase [ammonia], mitochondrial (Cps1).